The following is a 600-amino-acid chain: MKKSEMKGYRTHHCNELNLALVGHKAKLCGWVHSKRDHGGLLFIDLRDREGITQVVFHPEKDPPLFAKAKQLKNEFVVKVEGKVVERPAGTKNASIPTGEIELEAESLEILNPSQPLPFNLDEDIENEELRLSFRFLDLRRKKILNCLKVRHLVSSVVREYLSREGFLEVETPILSKSTPEGARDFLVPSRLSPGKFYALPQAPQQYKQLLMVAGIDKYFQIARCFRDEDLRSDRQPEFTQIDLEASFVEVEDIMKWVEEMIQLIFLKVLGIELSLPFVRLTYSEALDNYGSDKPDLRIEWQIQDVGTVFKNTQFKLFRDVIEKGGVIKALNAKGRAPMVNSSALEELVGIATSMGAKGLAHIRVENQEWKSPIVKFFSSEERKELERLLRMEPSDLVLFSAGPREQACLILGKIRLHLAEMTQGIPGNQWKFAWITDFPLFEYSPLEQKWNSVHHPFTRPHPEDLTKLNEGKYDAIRALAYDIVLNGVELGGGSLRIYEKELQEKVFSILGIGKERQELLFGHLLKAFQYGAPPHGGIALGLDRFVMLLTGSESLREVIAFPKNRHGVDLLTQSPSEVDYQQLKELNIQLSFPSIKIEP.

An L-aspartate-binding site is contributed by E181. The interval 205–208 (QQYK) is aspartate. Residue R227 coordinates L-aspartate. ATP-binding positions include 227 to 229 (RDE) and Q236. H455 contacts L-aspartate. E490 contacts ATP. R497 lines the L-aspartate pocket. Residue 542–545 (GLDR) participates in ATP binding.

This sequence belongs to the class-II aminoacyl-tRNA synthetase family. Type 1 subfamily. Homodimer.

The protein resides in the cytoplasm. It carries out the reaction tRNA(Asx) + L-aspartate + ATP = L-aspartyl-tRNA(Asx) + AMP + diphosphate. Functionally, aspartyl-tRNA synthetase with relaxed tRNA specificity since it is able to aspartylate not only its cognate tRNA(Asp) but also tRNA(Asn). Reaction proceeds in two steps: L-aspartate is first activated by ATP to form Asp-AMP and then transferred to the acceptor end of tRNA(Asp/Asn). The sequence is that of Aspartate--tRNA(Asp/Asn) ligase from Methylacidiphilum infernorum (isolate V4) (Methylokorus infernorum (strain V4)).